The chain runs to 384 residues: Cell division protein FtsZ (384 aa).

GTP-binding positions include 20–24 (GGGSN), 107–109 (GTG), glutamate 138, arginine 142, and asparagine 186.

The protein belongs to the FtsZ family. As to quaternary structure, homodimer. Polymerizes to form a dynamic ring structure in a strictly GTP-dependent manner. Interacts directly with several other division proteins.

The protein resides in the cytoplasm. Essential cell division protein that forms a contractile ring structure (Z ring) at the future cell division site. The regulation of the ring assembly controls the timing and the location of cell division. One of the functions of the FtsZ ring is to recruit other cell division proteins to the septum to produce a new cell wall between the dividing cells. Binds GTP and shows GTPase activity. This is Cell division protein FtsZ from Buchnera aphidicola subsp. Acyrthosiphon pisum (strain APS) (Acyrthosiphon pisum symbiotic bacterium).